The sequence spans 250 residues: Putative inactive flavonol synthase 2 (250 aa).

One can recognise a Fe2OG dioxygenase domain in the interval 171–250; sequence TEYVMRINNY…EQWKVQECVA (80 aa). The Fe cation site is built by His-195 and Asp-197.

The protein belongs to the iron/ascorbate-dependent oxidoreductase family.

This chain is Putative inactive flavonol synthase 2 (FLS2), found in Arabidopsis thaliana (Mouse-ear cress).